Consider the following 348-residue polypeptide: Zinc-type alcohol dehydrogenase-like protein C2E1P3.01 (348 aa).

The protein belongs to the zinc-containing alcohol dehydrogenase family. Quinone oxidoreductase subfamily.

Its subcellular location is the mitochondrion. This is Zinc-type alcohol dehydrogenase-like protein C2E1P3.01 from Schizosaccharomyces pombe (strain 972 / ATCC 24843) (Fission yeast).